Consider the following 500-residue polypeptide: Na(+)/H(+) antiporter NhaB (500 aa).

A run of 12 helical transmembrane segments spans residues 28 to 50 (FLLLNPLLLWLAGPVTSAWVLVG), 68 to 88 (GGLLVLEALLLGLATPEALYA), 98 to 118 (LLLMFMVAGIYFMKDLLLLLF), 121 to 141 (LLLGVRSKTLLSLLFCLLAAL), 145 to 165 (FLDALTVTAVVISVAVAFFAV), 205 to 225 (LLMHAAVGTALGGVCTLVGEP), 244 to 264 (QVAPVSMPVLAAGLLTCVLLE), 311 to 331 (VLIVGLALHVAEVGLIGLLVI), 350 to 370 (FQEALPFTALLVVFFAVVAVI), 394 to 414 (MLFIANGLLSAISDNVFVATI), 449 to 469 (VATPNGQAAFLFLLTSSIAPL), and 477 to 497 (MVWMALPYTLVMGGLGWWAVS).

It belongs to the NhaB Na(+)/H(+) (TC 2.A.34) antiporter family.

The protein resides in the cell inner membrane. It carries out the reaction 2 Na(+)(in) + 3 H(+)(out) = 2 Na(+)(out) + 3 H(+)(in). Na(+)/H(+) antiporter that extrudes sodium in exchange for external protons. In Pseudomonas aeruginosa (strain LESB58), this protein is Na(+)/H(+) antiporter NhaB.